The chain runs to 171 residues: MGKASANNVKSDKEAAKPAAKKDENKDFQYIVRIANKDLNGERPIPLALSDLKGIGLRLGYAIAERLNLQPTKKIGELKEDEIEKLKEYVENKEYDLPDWLLNHRREPVTGKNLNLVTTDLDVQVQEDINLMKKIRSYKGIRHEKGKKVRGQRTRSNGRRGLSIGVVRKKE.

Disordered stretches follow at residues 1 to 22 (MGKASANNVKSDKEAAKPAAKK) and 142 to 171 (RHEKGKKVRGQRTRSNGRRGLSIGVVRKKE). Residues 10–22 (KSDKEAAKPAAKK) are compositionally biased toward basic and acidic residues. Positions 142 to 158 (RHEKGKKVRGQRTRSNG) are enriched in basic residues.

Belongs to the universal ribosomal protein uS13 family. In terms of assembly, part of the 30S ribosomal subunit. Forms a loose heterodimer with protein S19. Forms two bridges to the 50S subunit in the 70S ribosome.

Functionally, located at the top of the head of the 30S subunit, it contacts several helices of the 16S rRNA. In the 70S ribosome it contacts the 23S rRNA (bridge B1a) and protein L5 of the 50S subunit (bridge B1b), connecting the 2 subunits; these bridges are implicated in subunit movement. The polypeptide is Small ribosomal subunit protein uS13 (Thermoplasma volcanium (strain ATCC 51530 / DSM 4299 / JCM 9571 / NBRC 15438 / GSS1)).